We begin with the raw amino-acid sequence, 694 residues long: Prolyl 3-hydroxylase 2 (694 aa).

A signal peptide spans 1–23 (MAPGSRSWGAVLLLAAMLPAACG). 4 TPR repeats span residues 35–68 (FDAL…RREL), 136–169 (RVPY…NPEH), 196–229 (HMED…YYAE), and 292–325 (PLHY…HPDD). Residues 386-418 (KRYGARQDEHSVPSSISSEPEDGPRLSLTKKPT) adopt a coiled-coil conformation. The interval 395 to 427 (HSVPSSISSEPEDGPRLSLTKKPTPKPDRELKE) is disordered. Residues Asn446 and Asn535 are each glycosylated (N-linked (GlcNAc...) asparagine). A Fe2OG dioxygenase domain is found at 543 to 657 (THLVCRTALS…RCAVALWFTL (115 aa)). Positions 566, 568, and 638 each coordinate Fe cation. Residue Arg648 is part of the active site. Residues 691–694 (KDEL) carry the Prevents secretion from ER motif.

This sequence belongs to the leprecan family. It depends on Fe cation as a cofactor. L-ascorbate is required as a cofactor.

The protein resides in the endoplasmic reticulum. The protein localises to the sarcoplasmic reticulum. It is found in the golgi apparatus. It carries out the reaction L-prolyl-[collagen] + 2-oxoglutarate + O2 = trans-3-hydroxy-L-prolyl-[collagen] + succinate + CO2. Functionally, prolyl 3-hydroxylase that catalyzes the post-translational formation of 3-hydroxyproline on collagens. Contributes to proline 3-hydroxylation of collagen COL4A1 and COL1A1 in tendons, the eye sclera and in the eye lens capsule. Has high activity with the type IV collagen COL4A1, and lower activity with COL1A1. Catalyzes hydroxylation of the first Pro in Gly-Pro-Hyp sequences where Hyp is 4-hydroxyproline. Has no activity on substrates that lack 4-hydroxyproline in the third position. The polypeptide is Prolyl 3-hydroxylase 2 (Gallus gallus (Chicken)).